We begin with the raw amino-acid sequence, 161 residues long: Small ribosomal subunit protein uS19 (161 aa).

Over residues 1–19 the composition is skewed to basic residues; the sequence is MARQKKYSGKGGARKKNKQ. The segment at 1–26 is disordered; the sequence is MARQKKYSGKGGARKKNKQKQSVAPR.

It belongs to the universal ribosomal protein uS19 family.

Its function is as follows. Protein S19 forms a complex with S13 that binds strongly to the 16S ribosomal RNA. The sequence is that of Small ribosomal subunit protein uS19 from Methanococcus maripaludis (strain C7 / ATCC BAA-1331).